The primary structure comprises 279 residues: HTH-type transcriptional regulator HdfR (279 aa).

Residues 1–58 (MDTELLKTFLEVSRTRHFGRAAESLYLTQSAVSFRIRQLENQLGVNLFTRHRNNIRLT) form the HTH lysR-type domain. A DNA-binding region (H-T-H motif) is located at residues 18–37 (FGRAAESLYLTQSAVSFRIR).

The protein belongs to the LysR transcriptional regulatory family.

Its function is as follows. Negatively regulates the transcription of the flagellar master operon flhDC by binding to the upstream region of the operon. This chain is HTH-type transcriptional regulator HdfR, found in Escherichia coli O17:K52:H18 (strain UMN026 / ExPEC).